Consider the following 238-residue polypeptide: Probable septum site-determining protein MinC (238 aa).

This sequence belongs to the MinC family. In terms of assembly, interacts with MinD and FtsZ.

Functionally, cell division inhibitor that blocks the formation of polar Z ring septums. Rapidly oscillates between the poles of the cell to destabilize FtsZ filaments that have formed before they mature into polar Z rings. Prevents FtsZ polymerization. The polypeptide is Probable septum site-determining protein MinC (Xylella fastidiosa (strain M12)).